The sequence spans 501 residues: Bifunctional purine biosynthesis protein PurH (501 aa).

The region spanning 1–144 is the MGS-like domain; the sequence is MKKRALISVF…KNFQDVVVIS (144 aa).

This sequence belongs to the PurH family.

The enzyme catalyses (6R)-10-formyltetrahydrofolate + 5-amino-1-(5-phospho-beta-D-ribosyl)imidazole-4-carboxamide = 5-formamido-1-(5-phospho-D-ribosyl)imidazole-4-carboxamide + (6S)-5,6,7,8-tetrahydrofolate. The catalysed reaction is IMP + H2O = 5-formamido-1-(5-phospho-D-ribosyl)imidazole-4-carboxamide. It participates in purine metabolism; IMP biosynthesis via de novo pathway; 5-formamido-1-(5-phospho-D-ribosyl)imidazole-4-carboxamide from 5-amino-1-(5-phospho-D-ribosyl)imidazole-4-carboxamide (10-formyl THF route): step 1/1. The protein operates within purine metabolism; IMP biosynthesis via de novo pathway; IMP from 5-formamido-1-(5-phospho-D-ribosyl)imidazole-4-carboxamide: step 1/1. This Clostridium botulinum (strain Eklund 17B / Type B) protein is Bifunctional purine biosynthesis protein PurH.